The primary structure comprises 179 residues: uncharacterized protein (179 aa).

This is an uncharacterized protein from Methanocaldococcus jannaschii (strain ATCC 43067 / DSM 2661 / JAL-1 / JCM 10045 / NBRC 100440) (Methanococcus jannaschii).